The chain runs to 354 residues: Cysteine proteinase 1 (354 aa).

A signal peptide spans 1–24 (MARRNPLLFAIVVTILFVVCYGSA). Positions 25–125 (LIAQTPPPVD…HKEDVHVDDS (101 aa)) are cleaved as a propeptide — activation peptide. Cystine bridges form between Cys-150-Cys-191, Cys-184-Cys-229, and Cys-282-Cys-330. Residue Cys-153 is part of the active site. N-linked (GlcNAc...) asparagine glycosylation occurs at Asn-208. Catalysis depends on residues His-289 and Asn-309.

The protein belongs to the peptidase C1 family.

The cysteine proteinases have a potential role in host-parasite interaction and virulence. In Leishmania pifanoi, this protein is Cysteine proteinase 1 (CYS1).